Here is a 518-residue protein sequence, read N- to C-terminus: Prosaposin (518 aa).

Residues 1–17 (MARRLLTLLGLLAAAVA) form the signal peptide. Residues 18-60 (SPVLWQKDCAKGPEVWCQSLRTASQCGAVKHCQQNVWSKPAVN) constitute a propeptide that is removed on maturation. The 41-residue stretch at 19–59 (PVLWQKDCAKGPEVWCQSLRTASQCGAVKHCQQNVWSKPAV) folds into the Saposin A-type 1 domain. 4 Saposin B-type domains span residues 60–143 (NSIP…QSLQ), 193–277 (TEDV…PSVK), 307–388 (TFSV…AANK), and 399–480 (AGGF…GAAK). 3 disulfides stabilise this stretch: cysteine 64–cysteine 139, cysteine 67–cysteine 133, and cysteine 95–cysteine 107. Residue asparagine 81 is glycosylated (N-linked (GlcNAc...) asparagine). A propeptide spanning residues 144–193 (KHLAAMKLQKQLQSNKIPELDFSELTSPFMANVPLLLYPQDKPKQKSKAT) is cleaved from the precursor. Disulfide bonds link cysteine 197–cysteine 273, cysteine 200–cysteine 267, and cysteine 229–cysteine 240. Asparagine 214 is a glycosylation site (N-linked (GlcNAc...) asparagine). A propeptide spanning residues 277–306 (KSVPLQTLVPAQVVHEVKMETVEKATVQEK) is cleaved from the precursor. Disulfide bonds link cysteine 311/cysteine 384, cysteine 314/cysteine 378, and cysteine 342/cysteine 353. N-linked (GlcNAc...) asparagine glycosylation is present at asparagine 328. Residues 388–398 (KPPQQPVVVKP) constitute a propeptide that is removed on maturation. 3 cysteine pairs are disulfide-bonded: cysteine 403/cysteine 476, cysteine 406/cysteine 470, and cysteine 434/cysteine 445. Residue asparagine 420 is glycosylated (N-linked (GlcNAc...) asparagine). Positions 480–518 (KKPLLGEDACVWGPGYWCKNMETAAQCNAVDHCRRHVWN) are excised as a propeptide. Residues 482–518 (PLLGEDACVWGPGYWCKNMETAAQCNAVDHCRRHVWN) enclose the Saposin A-type 2 domain.

Saposin-B is a homodimer. In terms of processing, this precursor is proteolytically processed to 4 small peptides, which are similar to each other and are sphingolipid hydrolase activator proteins.

It is found in the lysosome. It localises to the secreted. The lysosomal degradation of sphingolipids takes place by the sequential action of specific hydrolases. Some of these enzymes require specific low-molecular mass, non-enzymatic proteins: the sphingolipids activator proteins (coproteins). In terms of biological role, saposin-A and saposin-C stimulate the hydrolysis of glucosylceramide by beta-glucosylceramidase (EC 3.2.1.45) and galactosylceramide by beta-galactosylceramidase (EC 3.2.1.46). Saposin-C apparently acts by combining with the enzyme and acidic lipid to form an activated complex, rather than by solubilizing the substrate. Its function is as follows. Saposin-B stimulates the hydrolysis of galacto-cerebroside sulfate by arylsulfatase A (EC 3.1.6.8), GM1 gangliosides by beta-galactosidase (EC 3.2.1.23) and globotriaosylceramide by alpha-galactosidase A (EC 3.2.1.22). Saposin-B forms a solubilizing complex with the substrates of the sphingolipid hydrolases. Functionally, saposin-D is a specific sphingomyelin phosphodiesterase activator (EC 3.1.4.12). This Gallus gallus (Chicken) protein is Prosaposin (PSAP).